Reading from the N-terminus, the 90-residue chain is MARVTVQDAVEKVGNRFDLVLIAARRARQMQTGGKDALVPEENDKPTVIALREIEEGLITKEVLDARERQEQQEQEAAELAAVSSIAHNR.

A disordered region spans residues 69–90 (RQEQQEQEAAELAAVSSIAHNR).

This sequence belongs to the RNA polymerase subunit omega family. The RNAP catalytic core consists of 2 alpha, 1 beta, 1 beta' and 1 omega subunit. When a sigma factor is associated with the core the holoenzyme is formed, which can initiate transcription.

It catalyses the reaction RNA(n) + a ribonucleoside 5'-triphosphate = RNA(n+1) + diphosphate. Promotes RNA polymerase assembly. Latches the N- and C-terminal regions of the beta' subunit thereby facilitating its interaction with the beta and alpha subunits. The protein is DNA-directed RNA polymerase subunit omega of Vibrio parahaemolyticus serotype O3:K6 (strain RIMD 2210633).